Here is a 1353-residue protein sequence, read N- to C-terminus: DNA-directed RNA polymerase subunit beta' (1353 aa).

The segment at 1 to 117 (MSDNRLFTSV…AFQKLNDLFK (117 aa)) is unknown. A DNA-directed RNA polymerase subunit beta' region spans residues 118–1353 (LYNHFPSISS…SELTKKTNQN (1236 aa)). Residues C189, C191, C203, and C206 each coordinate Zn(2+). The Mg(2+) site is built by D578, D580, and D582.

This sequence belongs to the RNA polymerase beta' chain family. The RNAP catalytic core consists of 2 alpha, 1 beta, 1 beta' and 1 omega subunit. When a sigma factor is associated with the core the holoenzyme is formed, which can initiate transcription. Requires Mg(2+) as cofactor. Zn(2+) serves as cofactor.

It carries out the reaction RNA(n) + a ribonucleoside 5'-triphosphate = RNA(n+1) + diphosphate. Functionally, DNA-dependent RNA polymerase catalyzes the transcription of DNA into RNA using the four ribonucleoside triphosphates as substrates. The polypeptide is DNA-directed RNA polymerase subunit beta' (Aster yellows witches'-broom phytoplasma (strain AYWB)).